The following is a 436-amino-acid chain: 3-ketoacyl-CoA thiolase (436 aa).

Cys-99 serves as the catalytic Acyl-thioester intermediate. Residues His-392 and Cys-422 each act as proton acceptor in the active site.

It belongs to the thiolase-like superfamily. Thiolase family. In terms of assembly, heterotetramer of two alpha chains (FadJ) and two beta chains (FadI).

It is found in the cytoplasm. It catalyses the reaction an acyl-CoA + acetyl-CoA = a 3-oxoacyl-CoA + CoA. It functions in the pathway lipid metabolism; fatty acid beta-oxidation. In terms of biological role, catalyzes the final step of fatty acid oxidation in which acetyl-CoA is released and the CoA ester of a fatty acid two carbons shorter is formed. The protein is 3-ketoacyl-CoA thiolase of Escherichia coli O6:H1 (strain CFT073 / ATCC 700928 / UPEC).